The following is a 131-amino-acid chain: Large-conductance mechanosensitive channel (131 aa).

Helical transmembrane passes span 8 to 28 (FALK…GAFG), 30 to 50 (IVTS…VGGI), and 72 to 92 (GQFI…FMFI).

The protein belongs to the MscL family. As to quaternary structure, homopentamer.

It localises to the cell membrane. Its function is as follows. Channel that opens in response to stretch forces in the membrane lipid bilayer. May participate in the regulation of osmotic pressure changes within the cell. This chain is Large-conductance mechanosensitive channel, found in Alkaliphilus oremlandii (strain OhILAs) (Clostridium oremlandii (strain OhILAs)).